We begin with the raw amino-acid sequence, 316 residues long: MKIVKISPRGYCYGVVDAMVIARNAALDTSLPRPIYILGMIVHNKHVTDAFEEDGIITLDGPSRLDILDKIDSGTVIFTAHGVSPEVKQRAKEKGLTTIDATCPDVTKTHDLIEAKKAEGYHVIYIGKKNHPEPEGAVGIAPDIVHLIERADDLKTLEIPTDKILVTNQTTMSQWDVQHLMEDIQKKFPTAEFHKEICLATQVRQEAVAKQADVADLTIVVGDPKSNNSNRLAQVSQEIAGTKAYRVADVSEINLEWLQGVENVAVTAGASTPTPITKEVIAFLEQYDPMNPATWERVRKVPLQKILPRVKVKKEQ.

Cysteine 12 contributes to the [4Fe-4S] cluster binding site. (2E)-4-hydroxy-3-methylbut-2-enyl diphosphate contacts are provided by histidine 43 and histidine 81. Residues histidine 43 and histidine 81 each contribute to the dimethylallyl diphosphate site. Residues histidine 43 and histidine 81 each coordinate isopentenyl diphosphate. Cysteine 103 contacts [4Fe-4S] cluster. Histidine 131 provides a ligand contact to (2E)-4-hydroxy-3-methylbut-2-enyl diphosphate. Histidine 131 contributes to the dimethylallyl diphosphate binding site. Position 131 (histidine 131) interacts with isopentenyl diphosphate. The active-site Proton donor is the glutamate 133. Residue threonine 170 coordinates (2E)-4-hydroxy-3-methylbut-2-enyl diphosphate. Residue cysteine 198 participates in [4Fe-4S] cluster binding. Residues serine 226, asparagine 228, and serine 271 each contribute to the (2E)-4-hydroxy-3-methylbut-2-enyl diphosphate site. The dimethylallyl diphosphate site is built by serine 226, asparagine 228, and serine 271. 3 residues coordinate isopentenyl diphosphate: serine 226, asparagine 228, and serine 271.

It belongs to the IspH family. The cofactor is [4Fe-4S] cluster.

It catalyses the reaction isopentenyl diphosphate + 2 oxidized [2Fe-2S]-[ferredoxin] + H2O = (2E)-4-hydroxy-3-methylbut-2-enyl diphosphate + 2 reduced [2Fe-2S]-[ferredoxin] + 2 H(+). The enzyme catalyses dimethylallyl diphosphate + 2 oxidized [2Fe-2S]-[ferredoxin] + H2O = (2E)-4-hydroxy-3-methylbut-2-enyl diphosphate + 2 reduced [2Fe-2S]-[ferredoxin] + 2 H(+). It participates in isoprenoid biosynthesis; dimethylallyl diphosphate biosynthesis; dimethylallyl diphosphate from (2E)-4-hydroxy-3-methylbutenyl diphosphate: step 1/1. Its pathway is isoprenoid biosynthesis; isopentenyl diphosphate biosynthesis via DXP pathway; isopentenyl diphosphate from 1-deoxy-D-xylulose 5-phosphate: step 6/6. In terms of biological role, catalyzes the conversion of 1-hydroxy-2-methyl-2-(E)-butenyl 4-diphosphate (HMBPP) into a mixture of isopentenyl diphosphate (IPP) and dimethylallyl diphosphate (DMAPP). Acts in the terminal step of the DOXP/MEP pathway for isoprenoid precursor biosynthesis. This Bacillus cereus (strain AH820) protein is 4-hydroxy-3-methylbut-2-enyl diphosphate reductase.